Reading from the N-terminus, the 408-residue chain is uncharacterized protein (408 aa).

2 disordered regions span residues 184-206 (DENN…SILF) and 254-317 (NNKT…SSDS). The span at 187-206 (NNNSNNNNNNNSNNNSSILF) shows a compositional bias: low complexity.

This is an uncharacterized protein from Dictyostelium discoideum (Social amoeba).